The chain runs to 244 residues: Octanoyltransferase (244 aa).

The segment at 1–21 (MDKKLHSVSPESGPNSNLDLT) is disordered. Positions 9–21 (SPESGPNSNLDLT) are enriched in polar residues. A BPL/LPL catalytic domain is found at 59–244 (PFSPQAVWLL…LNWEKINQSL (186 aa)). Substrate-binding positions include 101-108 (RGGEVTHH), 168-170 (SIG), and 181-183 (GFS). C199 acts as the Acyl-thioester intermediate in catalysis.

It belongs to the LipB family.

The protein resides in the cytoplasm. The catalysed reaction is octanoyl-[ACP] + L-lysyl-[protein] = N(6)-octanoyl-L-lysyl-[protein] + holo-[ACP] + H(+). The protein operates within protein modification; protein lipoylation via endogenous pathway; protein N(6)-(lipoyl)lysine from octanoyl-[acyl-carrier-protein]: step 1/2. In terms of biological role, catalyzes the transfer of endogenously produced octanoic acid from octanoyl-acyl-carrier-protein onto the lipoyl domains of lipoate-dependent enzymes. Lipoyl-ACP can also act as a substrate although octanoyl-ACP is likely to be the physiological substrate. The chain is Octanoyltransferase from Prochlorococcus marinus (strain NATL1A).